A 611-amino-acid polypeptide reads, in one-letter code: Dual specificity protein phosphatase CDC14AB (611 aa).

Positions 23–178 (DLLGASEFIK…ALQHGFLNFE (156 aa)) are a. The segment at 179-192 (TFDVNEYEHYERVE) is linker. The interval 193 to 359 (NGDLNWITPG…HGDSLRSKQR (167 aa)) is b. In terms of domain architecture, Tyrosine-protein phosphatase spans 194–352 (GDLNWITPGK…KQASLWAHGD (159 aa)). Catalysis depends on Cys294, which acts as the Phosphocysteine intermediate. The tract at residues 408 to 611 (KLRALKGRRQ…PSLQSEYVQY (204 aa)) is disordered. The span at 456-490 (SPLKSSKVPASSSSSSSSSSVSASAKRIGRSSSSS) shows a compositional bias: low complexity. The span at 491–511 (TNLKSTRLASSLGNLYEPNTE) shows a compositional bias: polar residues. Low complexity predominate over residues 512–553 (SISSGKPPSPSSFTPHPVRTTYNYHYEVNNNNNQYSTTSSPS). Polar residues-rich tracts occupy residues 554–569 (KSLGYNLNHSGPSGAS) and 591–611 (GLSTRHLSRSIPSLQSEYVQY).

This sequence belongs to the protein-tyrosine phosphatase family. Non-receptor class CDC14 subfamily.

The protein localises to the nucleus. The protein resides in the cytoplasm. It localises to the cytoskeleton. Its subcellular location is the microtubule organizing center. It is found in the centrosome. The protein localises to the spindle pole. The protein resides in the spindle. It localises to the cell projection. Its subcellular location is the kinocilium. It catalyses the reaction O-phospho-L-tyrosyl-[protein] + H2O = L-tyrosyl-[protein] + phosphate. The enzyme catalyses O-phospho-L-seryl-[protein] + H2O = L-seryl-[protein] + phosphate. It carries out the reaction O-phospho-L-threonyl-[protein] + H2O = L-threonyl-[protein] + phosphate. Dual-specificity phosphatase. Required for centrosome separation and productive cytokinesis during cell division. Dephosphorylates SIRT2 around early anaphase. May dephosphorylate the APC subunit FZR1/CDH1, thereby promoting APC-FZR1 dependent degradation of mitotic cyclins and subsequent exit from mitosis. The protein is Dual specificity protein phosphatase CDC14AB (cdc14ab) of Danio rerio (Zebrafish).